The following is a 336-amino-acid chain: Glycerol-3-phosphate dehydrogenase [NAD(P)+] (336 aa).

Serine 16, tyrosine 17, histidine 37, and lysine 111 together coordinate NADPH. Positions 111, 140, and 142 each coordinate sn-glycerol 3-phosphate. Residue alanine 144 participates in NADPH binding. The sn-glycerol 3-phosphate site is built by lysine 196, aspartate 249, serine 259, arginine 260, and asparagine 261. Lysine 196 serves as the catalytic Proton acceptor. Residue arginine 260 participates in NADPH binding. 2 residues coordinate NADPH: valine 284 and glutamate 286.

This sequence belongs to the NAD-dependent glycerol-3-phosphate dehydrogenase family.

It is found in the cytoplasm. It carries out the reaction sn-glycerol 3-phosphate + NAD(+) = dihydroxyacetone phosphate + NADH + H(+). The enzyme catalyses sn-glycerol 3-phosphate + NADP(+) = dihydroxyacetone phosphate + NADPH + H(+). Its pathway is membrane lipid metabolism; glycerophospholipid metabolism. Its function is as follows. Catalyzes the reduction of the glycolytic intermediate dihydroxyacetone phosphate (DHAP) to sn-glycerol 3-phosphate (G3P), the key precursor for phospholipid synthesis. The sequence is that of Glycerol-3-phosphate dehydrogenase [NAD(P)+] from Actinobacillus pleuropneumoniae serotype 3 (strain JL03).